The chain runs to 194 residues: Dephospho-CoA kinase (194 aa).

In terms of domain architecture, DPCK spans 3–194 (IVGLTGSIGM…RAIVDDLRAG (192 aa)). 11 to 16 (GMGKST) lines the ATP pocket.

The protein belongs to the CoaE family.

It is found in the cytoplasm. It carries out the reaction 3'-dephospho-CoA + ATP = ADP + CoA + H(+). It participates in cofactor biosynthesis; coenzyme A biosynthesis; CoA from (R)-pantothenate: step 5/5. Catalyzes the phosphorylation of the 3'-hydroxyl group of dephosphocoenzyme A to form coenzyme A. This Rhizobium meliloti (strain 1021) (Ensifer meliloti) protein is Dephospho-CoA kinase.